A 279-amino-acid chain; its full sequence is Glycerol uptake facilitator protein (279 aa).

Topologically, residues 1 to 8 (MTTAAPTP) are cytoplasmic. A helical membrane pass occupies residues 9-37 (SLFGQCLAEFLGTALLIFFGTGCVAALKV). The Periplasmic segment spans residues 38-42 (AGASF). A helical transmembrane segment spans residues 43–63 (GLWEISIIWGVGVSMAIYLSA). Topologically, residues 64-66 (GVS) are cytoplasmic. Residues 67–70 (GAHL) lie within the membrane without spanning it. The short motif at 71-73 (NPA) is the NPA 1 element. The segment at residues 71–81 (NPAVSIALWLF) is an intramembrane region (helical). Residues 82 to 87 (AGFEGR) lie on the Cytoplasmic side of the membrane. The helical transmembrane segment at 88–111 (KLPFYITAQVAGAFCAAALVYTLY) threads the bilayer. Over 112–146 (SSLFIEFEQAQNIVRGSQDSLALASVFSTYPHPAL) the chain is Periplasmic. Residues 147–172 (SVGQAFLVEVVITAILMAVIMALTDD) form a helical membrane-spanning segment. Residues 173-180 (GNGLPRGP) are Cytoplasmic-facing. Residues 181–197 (LAPLLIGLLIAVIGSAM) traverse the membrane as a helical segment. The Periplasmic segment spans residues 198-201 (GPLT). An intramembrane segment occupies 202–205 (GFAM). The short motif at 206-208 (NPA) is the NPA 2 element. The helical intramembrane region spans 206–219 (NPARDFGPKLMTYL). The Periplasmic portion of the chain corresponds to 220-234 (AGWGPIAFTGGREIP). A helical transmembrane segment spans residues 235–257 (YFLVPIFAPILGACLGAGGYRVL). Residues 258-279 (IARHLPSAAAPAEAEPEKVRAS) are Cytoplasmic-facing.

The protein belongs to the MIP/aquaporin (TC 1.A.8) family.

The protein resides in the cell inner membrane. It carries out the reaction glycerol(in) = glycerol(out). In terms of biological role, mediates glycerol diffusion across the cytoplasmic membrane via a pore-type mechanism. In Pseudomonas aeruginosa (strain ATCC 15692 / DSM 22644 / CIP 104116 / JCM 14847 / LMG 12228 / 1C / PRS 101 / PAO1), this protein is Glycerol uptake facilitator protein (glpF).